The primary structure comprises 399 residues: Elongation factor Tu (399 aa).

In terms of domain architecture, tr-type G spans 10 to 204 (KPHVNIGTIG…AVDASIPEPE (195 aa)). The G1 stretch occupies residues 19–26 (GHVDHGKT). A GTP-binding site is contributed by 19-26 (GHVDHGKT). Threonine 26 contributes to the Mg(2+) binding site. Positions 60–64 (GITIN) are G2. Positions 81–84 (DCPG) are G3. Residues 81–85 (DCPGH) and 136–139 (NKCD) each bind GTP. The tract at residues 136–139 (NKCD) is G4. The segment at 174 to 176 (SGL) is G5.

Belongs to the TRAFAC class translation factor GTPase superfamily. Classic translation factor GTPase family. EF-Tu/EF-1A subfamily. In terms of assembly, monomer.

It is found in the cytoplasm. The catalysed reaction is GTP + H2O = GDP + phosphate + H(+). Its function is as follows. GTP hydrolase that promotes the GTP-dependent binding of aminoacyl-tRNA to the A-site of ribosomes during protein biosynthesis. The protein is Elongation factor Tu of Prochlorococcus marinus subsp. pastoris (strain CCMP1986 / NIES-2087 / MED4).